We begin with the raw amino-acid sequence, 225 residues long: Dehydrin DHN4 (225 aa).

The interval 1–78 (MEYQGQQHGR…EDDGMGGRRK (78 aa)) is disordered. A compositionally biased stretch (gly residues) spans 21–39 (HGVGTGMGTHGGVGTGAAA). 5 repeat units span residues 105-118 (YGQQ…TGGT), 119-136 (YGQQ…TDGT), 137-159 (YGQQ…TGGT), 160-178 (YGQQ…GTGG), and 179-199 (TYGQ…TGGT). The segment at 105-199 (YGQQGTGMAG…GTGMHGTGGT (95 aa)) is 5 X approximate tandem repeats.

The protein belongs to the plant dehydrin family.

This chain is Dehydrin DHN4 (DHN4), found in Hordeum vulgare (Barley).